The primary structure comprises 157 residues: 2-C-methyl-D-erythritol 2,4-cyclodiphosphate synthase (157 aa).

2 residues coordinate a divalent metal cation: aspartate 9 and histidine 11. 4-CDP-2-C-methyl-D-erythritol 2-phosphate-binding positions include aspartate 9–histidine 11 and histidine 35–serine 36. Histidine 43 is a binding site for a divalent metal cation. 4-CDP-2-C-methyl-D-erythritol 2-phosphate contacts are provided by residues aspartate 57 to glycine 59, phenylalanine 62 to aspartate 66, alanine 101 to alanine 107, threonine 133 to glutamate 136, phenylalanine 140, and arginine 143.

It belongs to the IspF family. As to quaternary structure, homotrimer. A divalent metal cation serves as cofactor.

It carries out the reaction 4-CDP-2-C-methyl-D-erythritol 2-phosphate = 2-C-methyl-D-erythritol 2,4-cyclic diphosphate + CMP. It functions in the pathway isoprenoid biosynthesis; isopentenyl diphosphate biosynthesis via DXP pathway; isopentenyl diphosphate from 1-deoxy-D-xylulose 5-phosphate: step 4/6. Functionally, involved in the biosynthesis of isopentenyl diphosphate (IPP) and dimethylallyl diphosphate (DMAPP), two major building blocks of isoprenoid compounds. Catalyzes the conversion of 4-diphosphocytidyl-2-C-methyl-D-erythritol 2-phosphate (CDP-ME2P) to 2-C-methyl-D-erythritol 2,4-cyclodiphosphate (ME-CPP) with a corresponding release of cytidine 5-monophosphate (CMP). This chain is 2-C-methyl-D-erythritol 2,4-cyclodiphosphate synthase, found in Halalkalibacterium halodurans (strain ATCC BAA-125 / DSM 18197 / FERM 7344 / JCM 9153 / C-125) (Bacillus halodurans).